The sequence spans 552 residues: uncharacterized protein (552 aa).

In terms of domain architecture, DhaL spans 8 to 200 (KLFADMIIQG…LLCVYEGFLK (193 aa)).

This is an uncharacterized protein from Staphylococcus epidermidis (strain ATCC 35984 / DSM 28319 / BCRC 17069 / CCUG 31568 / BM 3577 / RP62A).